The following is a 1040-amino-acid chain: Multidrug resistance protein MdtB (1040 aa).

Transmembrane regions (helical) follow at residues 25–45 (LLMA…PVAA), 347–367 (LMLA…NIPA), 369–389 (IIPG…MVFL), 396–416 (LTLM…IVVI), 440–460 (IGFT…PLLF), 472–492 (FAVT…TLTP), 537–557 (WLTL…WIVI), 869–889 (LIVA…ESFI), 890–910 (HPIT…LALM), 911–931 (IAGS…IGIV), 968–988 (ILMT…STGV), and 998–1018 (IAMV…TPVI).

It belongs to the resistance-nodulation-cell division (RND) (TC 2.A.6) family. MdtB subfamily. Part of a tripartite efflux system composed of MdtA, MdtB and MdtC. MdtB forms a heteromultimer with MdtC.

It localises to the cell inner membrane. The polypeptide is Multidrug resistance protein MdtB (Salmonella arizonae (strain ATCC BAA-731 / CDC346-86 / RSK2980)).